The primary structure comprises 528 residues: GMP synthase [glutamine-hydrolyzing] (528 aa).

A Glutamine amidotransferase type-1 domain is found at serine 13–aspartate 204. Cysteine 90 functions as the Nucleophile in the catalytic mechanism. Active-site residues include histidine 178 and glutamate 180. The GMPS ATP-PPase domain occupies tryptophan 205–arginine 403. Serine 232–serine 238 contributes to the ATP binding site.

In terms of assembly, homodimer.

The catalysed reaction is XMP + L-glutamine + ATP + H2O = GMP + L-glutamate + AMP + diphosphate + 2 H(+). It participates in purine metabolism; GMP biosynthesis; GMP from XMP (L-Gln route): step 1/1. In terms of biological role, catalyzes the synthesis of GMP from XMP. The sequence is that of GMP synthase [glutamine-hydrolyzing] from Prochlorococcus marinus (strain SARG / CCMP1375 / SS120).